The chain runs to 475 residues: Ribulose bisphosphate carboxylase large chain (475 aa).

Positions 1 to 2 (MS) are excised as a propeptide. At proline 3 the chain carries N-acetylproline. Lysine 14 carries the N6,N6,N6-trimethyllysine modification. Asparagine 123 and threonine 173 together coordinate substrate. The active-site Proton acceptor is the lysine 175. Substrate is bound at residue lysine 177. Mg(2+) contacts are provided by lysine 201, aspartate 203, and glutamate 204. The residue at position 201 (lysine 201) is an N6-carboxylysine. Histidine 294 functions as the Proton acceptor in the catalytic mechanism. Substrate-binding residues include arginine 295, histidine 327, and serine 379.

It belongs to the RuBisCO large chain family. Type I subfamily. Heterohexadecamer of 8 large chains and 8 small chains; disulfide-linked. The disulfide link is formed within the large subunit homodimers. Mg(2+) is required as a cofactor. In terms of processing, the disulfide bond which can form in the large chain dimeric partners within the hexadecamer appears to be associated with oxidative stress and protein turnover.

The protein resides in the plastid. The protein localises to the chloroplast. It catalyses the reaction 2 (2R)-3-phosphoglycerate + 2 H(+) = D-ribulose 1,5-bisphosphate + CO2 + H2O. The enzyme catalyses D-ribulose 1,5-bisphosphate + O2 = 2-phosphoglycolate + (2R)-3-phosphoglycerate + 2 H(+). Functionally, ruBisCO catalyzes two reactions: the carboxylation of D-ribulose 1,5-bisphosphate, the primary event in carbon dioxide fixation, as well as the oxidative fragmentation of the pentose substrate in the photorespiration process. Both reactions occur simultaneously and in competition at the same active site. The chain is Ribulose bisphosphate carboxylase large chain from Carica papaya (Papaya).